Consider the following 435-residue polypeptide: Cell adhesion molecule 2 (435 aa).

An N-terminal signal peptide occupies residues 1 to 24 (MIWKRSAVLRFYSVCGLLLLGSQG). The Extracellular segment spans residues 25–367 (QFPLTQNVTV…SLAGQNGPDH (343 aa)). Residues 27–119 (PLTQNVTVVE…PVKTSKAYLT (93 aa)) enclose the Ig-like V-type domain. Asn-31 and Asn-51 each carry an N-linked (GlcNAc...) asparagine glycan. Intrachain disulfides connect Cys-44/Cys-104, Cys-146/Cys-203, and Cys-248/Cys-296. 2 consecutive Ig-like C2-type domains span residues 127–219 (PQIS…VAMQ) and 227–312 (PSVK…YVLI). Asn-291 is a glycosylation site (N-linked (GlcNAc...) asparagine). The span at 341 to 351 (TTSPSTSASSS) shows a compositional bias: low complexity. Residues 341–360 (TTSPSTSASSSSRRDPNSLA) form a disordered region. The chain crosses the membrane as a helical span at residues 368 to 388 (ALIGGIVAVVVFVTLCSIFLL). Residues 389-435 (GRYLARHKGTYLTNEAKGAEDAPDADTAIINAEGSQVNAEEKKEYFI) are Cytoplasmic-facing. Ser-423 carries the post-translational modification Phosphoserine.

The protein belongs to the nectin family. In terms of processing, glycosylation at Asn-51 reduces adhesive binding.

It is found in the cell membrane. The protein resides in the synapse. It localises to the cell projection. The protein localises to the axon. Its function is as follows. Adhesion molecule that engages in homo- and heterophilic interactions with the other nectin-like family members, leading to cell aggregation. Important for synapse organization, providing regulated trans-synaptic adhesion. Preferentially binds to oligodendrocytes. This is Cell adhesion molecule 2 (Cadm2) from Rattus norvegicus (Rat).